We begin with the raw amino-acid sequence, 255 residues long: Phosphate import ATP-binding protein PstB (255 aa).

Residues 8 to 250 enclose the ABC transporter domain; the sequence is IKSSNLNVHY…PGNKMTQDYI (243 aa). 40–47 provides a ligand contact to ATP; the sequence is GPSGCGKS.

This sequence belongs to the ABC transporter superfamily. Phosphate importer (TC 3.A.1.7) family. As to quaternary structure, the complex is composed of two ATP-binding proteins (PstB), two transmembrane proteins (PstC and PstA) and a solute-binding protein (PstS).

It localises to the cell inner membrane. It carries out the reaction phosphate(out) + ATP + H2O = ADP + 2 phosphate(in) + H(+). Functionally, part of the ABC transporter complex PstSACB involved in phosphate import. Responsible for energy coupling to the transport system. In Pelagibacter ubique (strain HTCC1062), this protein is Phosphate import ATP-binding protein PstB.